Here is a 286-residue protein sequence, read N- to C-terminus: Bifunctional protein FolD (286 aa).

Residues 164–166 (GAS), Ile-189, and Ile-230 contribute to the NADP(+) site.

It belongs to the tetrahydrofolate dehydrogenase/cyclohydrolase family. As to quaternary structure, homodimer.

It carries out the reaction (6R)-5,10-methylene-5,6,7,8-tetrahydrofolate + NADP(+) = (6R)-5,10-methenyltetrahydrofolate + NADPH. The catalysed reaction is (6R)-5,10-methenyltetrahydrofolate + H2O = (6R)-10-formyltetrahydrofolate + H(+). Its pathway is one-carbon metabolism; tetrahydrofolate interconversion. Its function is as follows. Catalyzes the oxidation of 5,10-methylenetetrahydrofolate to 5,10-methenyltetrahydrofolate and then the hydrolysis of 5,10-methenyltetrahydrofolate to 10-formyltetrahydrofolate. The sequence is that of Bifunctional protein FolD from Wolinella succinogenes (strain ATCC 29543 / DSM 1740 / CCUG 13145 / JCM 31913 / LMG 7466 / NCTC 11488 / FDC 602W) (Vibrio succinogenes).